Consider the following 289-residue polypeptide: Elongation factor Ts (289 aa).

Residues 82–85 (TDFV) form an involved in Mg(2+) ion dislocation from EF-Tu region.

Belongs to the EF-Ts family.

The protein resides in the cytoplasm. In terms of biological role, associates with the EF-Tu.GDP complex and induces the exchange of GDP to GTP. It remains bound to the aminoacyl-tRNA.EF-Tu.GTP complex up to the GTP hydrolysis stage on the ribosome. This is Elongation factor Ts from Marinobacter nauticus (strain ATCC 700491 / DSM 11845 / VT8) (Marinobacter aquaeolei).